Here is a 1123-residue protein sequence, read N- to C-terminus: MNKTKLIKIIFVIGVWILLSTFIINIYNENFEIVNYNNNSQSLKKIFQLNGDLKDEKLSIFLIPHSHCDSGWLQDYDWYYNHVVQYILSGIVNELNLDKEKKFNWVEIGGWVQNDEATATIDDVITQMTQGHQWLKDTLNYTIEYAWQIDPFGYSSSTPTIFSSMGIKGLIINRVSDDVKSYMKSAKEMEFIWKGSESLGEQSQMLVSTLNVHYDYPKHIDPKKDFSLEERVKGFTKYIKDLSNTRESSILMIPLGDDFRYSNAKNEFSVSKEWLKVIQDNKEKYNIKEIKYATIDEYFIALEDEFMNKLGKTVEENLKTGFSSTLSLYNKDFFPYSTGDLEYWTGYYTTRPLLKRLIRESSLLQKSSDILYTLAIGENSNNQIDINNLQTLSNQLNENRNTIALVQHHDIVTGTSRSFVLNDNFQRLQKSRISNYNIISNSLEYLLNKDNNNNENTDSTNEPFNFENVIDLSNEINNQYSLVFHNTLGWEVNQHVSFRIKVNKNDNQLLESIQLVEAISNKTIQIQIIPIQDDSNCQSIENNYIVFAIINLPPLGLNTYYLSISSNEDSKPNTILSKPKLLKKGNEINFNNNRFKVEFESNGLISKITDKNSNEIKTIEQTFHQYSTKKSGPYIFNVKGGKKHGFLENPDKFIYHDGPLVSQLTMLYGVDDGCNVTSIVVQRIYKNNEIDNSNSKSLITENYIETGYSINGDMNRETTINYKVKDLENDDIFYTDNGLESRKRIYNHDRTVNQNYYPVLGYIKLKETSENNNHQYTVYVDRSVGATSPSDGEMEIMIHRTMDTDDWKGVNWPSKDIGRSDAKLYFNMDLVNNQLQNEKRISLHITNQPIMFVKKHNNQTGYLLKYSPLSNQLPSNIHLQSLLTLKNNTVGLRLFNIHEVDSNTQSTTDTDKSTLFNELEISNFIETGLSFLKLTKNNLIDKYSTRINKKFPVKCGESEYSFINEKPSSIIFSNNGTNNIIDGENKGENNKTIETIQIKPHEIKSFTFNFNFQLDQIIPNNNNYAINKELNNEYIEQSIENQRYEYDFSFFPIKPTFYDDRGKYNRPNHLALILSLSIGTPAGILIIVIALVVIYKKRKNRKTLTSSYSLLNLILKDRADSSP.

A signal peptide spans 1–21; it reads MNKTKLIKIIFVIGVWILLST. Residues Asn2 and Asn38 are each glycosylated (N-linked (GlcNAc...) asparagine). Residues 22–1072 are Extracellular-facing; the sequence is FIINIYNENF…KYNRPNHLAL (1051 aa). Residues His67 and Asp69 each coordinate Zn(2+). N-linked (GlcNAc...) asparagine glycosylation is present at Asn140. Residues Asp150 and His409 each contribute to the Zn(2+) site. Asp150 acts as the Nucleophile in catalysis. N-linked (GlcNAc...) asparagine glycosylation is found at Asn521, Asn675, Asn858, Asn887, Asn975, and Asn990. The helical transmembrane segment at 1073–1093 threads the bilayer; sequence ILSLSIGTPAGILIIVIALVV. Residues 1094 to 1123 are Cytoplasmic-facing; it reads IYKKRKNRKTLTSSYSLLNLILKDRADSSP.

It belongs to the glycosyl hydrolase 38 family. Zn(2+) serves as cofactor.

It localises to the membrane. The catalysed reaction is Hydrolysis of terminal, non-reducing alpha-D-mannose residues in alpha-D-mannosides.. This is Alpha-mannosidase E (manE) from Dictyostelium discoideum (Social amoeba).